The chain runs to 153 residues: Nascent polypeptide-associated complex subunit beta (153 aa).

Disordered regions lie at residues 1-40 (MSDV…ADDK) and 126-153 (LQKE…PKVE). Positions 23–32 (TPRRKVKRAP) are enriched in basic residues. Residues 36–101 (GADDKKLQLA…GEDKELTELV (66 aa)) form the NAC-A/B domain. Positions 132–147 (EDDDEIPDLVEGENFE) are enriched in acidic residues.

Belongs to the NAC-beta family. As to quaternary structure, part of the nascent polypeptide-associated complex (NAC), consisting of EGD2 and EGD1. NAC associates with ribosomes via EGD1.

Its subcellular location is the cytoplasm. The protein localises to the nucleus. Component of the nascent polypeptide-associated complex (NAC), a dynamic component of the ribosomal exit tunnel, protecting the emerging polypeptides from interaction with other cytoplasmic proteins to ensure appropriate nascent protein targeting. The NAC complex also promotes mitochondrial protein import by enhancing productive ribosome interactions with the outer mitochondrial membrane and blocks the inappropriate interaction of ribosomes translating non-secretory nascent polypeptides with translocation sites in the membrane of the endoplasmic reticulum. EGD1 may act as a transcription factor that exert a negative effect on the expression of several genes that are transcribed by RNA polymerase II. The polypeptide is Nascent polypeptide-associated complex subunit beta (EGD1) (Gibberella zeae (strain ATCC MYA-4620 / CBS 123657 / FGSC 9075 / NRRL 31084 / PH-1) (Wheat head blight fungus)).